Here is a 101-residue protein sequence, read N- to C-terminus: Apolipoprotein C-II (101 aa).

An N-terminal signal peptide occupies residues 1 to 22 (MGTRFLLALCLVLLVLGFEVQG). The tract at residues 66-74 (AVDEKLRDL) is lipid binding. Residues 78–101 (STAAMSTYTGIFTDQVLSVLKGEE) form a lipoprotein lipase cofactor region.

It belongs to the apolipoprotein C2 family. Post-translationally, proapolipoprotein C-II is synthesized as a sialic acid containing glycoprotein which is subsequently desialylated prior to its proteolytic processing. In terms of processing, proapolipoprotein C-II, the major form found in plasma undergoes proteolytic cleavage of its N-terminal hexapeptide to generate apolipoprotein C-II, which occurs as the minor form in plasma.

It is found in the secreted. In terms of biological role, component of chylomicrons, very low-density lipoproteins (VLDL), low-density lipoproteins (LDL), and high-density lipoproteins (HDL) in plasma. Plays an important role in lipoprotein metabolism as an activator of lipoprotein lipase. Both proapolipoprotein C-II and apolipoprotein C-II can activate lipoprotein lipase. This Macaca fascicularis (Crab-eating macaque) protein is Apolipoprotein C-II (APOC2).